The chain runs to 860 residues: Alanine--tRNA ligase (860 aa).

Zn(2+) contacts are provided by histidine 553, histidine 557, cysteine 655, and histidine 659.

Belongs to the class-II aminoacyl-tRNA synthetase family. Requires Zn(2+) as cofactor.

Its subcellular location is the cytoplasm. It catalyses the reaction tRNA(Ala) + L-alanine + ATP = L-alanyl-tRNA(Ala) + AMP + diphosphate. Catalyzes the attachment of alanine to tRNA(Ala) in a two-step reaction: alanine is first activated by ATP to form Ala-AMP and then transferred to the acceptor end of tRNA(Ala). Also edits incorrectly charged Ser-tRNA(Ala) and Gly-tRNA(Ala) via its editing domain. This is Alanine--tRNA ligase from Legionella pneumophila (strain Corby).